A 215-amino-acid chain; its full sequence is Uracil phosphoribosyltransferase (215 aa).

5-phospho-alpha-D-ribose 1-diphosphate contacts are provided by residues R84, R109, and 136-144; that span reads DPMLATGNT. Residues I198 and 203–205 each bind uracil; that span reads GDA. 5-phospho-alpha-D-ribose 1-diphosphate is bound at residue D204.

The protein belongs to the UPRTase family. Mg(2+) is required as a cofactor.

It carries out the reaction UMP + diphosphate = 5-phospho-alpha-D-ribose 1-diphosphate + uracil. The protein operates within pyrimidine metabolism; UMP biosynthesis via salvage pathway; UMP from uracil: step 1/1. With respect to regulation, allosterically activated by GTP. Its function is as follows. Catalyzes the conversion of uracil and 5-phospho-alpha-D-ribose 1-diphosphate (PRPP) to UMP and diphosphate. The sequence is that of Uracil phosphoribosyltransferase from Methanothermobacter thermautotrophicus (strain ATCC 29096 / DSM 1053 / JCM 10044 / NBRC 100330 / Delta H) (Methanobacterium thermoautotrophicum).